Here is a 150-residue protein sequence, read N- to C-terminus: Large ribosomal subunit protein bL9 (150 aa).

The protein belongs to the bacterial ribosomal protein bL9 family.

Functionally, binds to the 23S rRNA. The chain is Large ribosomal subunit protein bL9 from Streptococcus mutans serotype c (strain ATCC 700610 / UA159).